A 243-amino-acid polypeptide reads, in one-letter code: Adenosylcobinamide-GDP ribazoletransferase (243 aa).

5 helical membrane passes run 31–48 (LLFY…LWVL), 61–81 (AALL…DGLA), 109–129 (IAVV…VALI), 134–154 (GFAL…LFLC), and 188–208 (LLLG…LFFW).

Belongs to the CobS family. The cofactor is Mg(2+).

It is found in the cell inner membrane. It catalyses the reaction alpha-ribazole + adenosylcob(III)inamide-GDP = adenosylcob(III)alamin + GMP + H(+). The catalysed reaction is alpha-ribazole 5'-phosphate + adenosylcob(III)inamide-GDP = adenosylcob(III)alamin 5'-phosphate + GMP + H(+). Its pathway is cofactor biosynthesis; adenosylcobalamin biosynthesis; adenosylcobalamin from cob(II)yrinate a,c-diamide: step 7/7. Its function is as follows. Joins adenosylcobinamide-GDP and alpha-ribazole to generate adenosylcobalamin (Ado-cobalamin). Also synthesizes adenosylcobalamin 5'-phosphate from adenosylcobinamide-GDP and alpha-ribazole 5'-phosphate. The protein is Adenosylcobinamide-GDP ribazoletransferase of Pseudomonas fluorescens (strain ATCC BAA-477 / NRRL B-23932 / Pf-5).